The following is a 296-amino-acid chain: Chronophin (296 aa).

Asp25 (nucleophile) is an active-site residue. The Mg(2+) site is built by Asp25 and Asn27. Asn27 functions as the Proton donor in the catalytic mechanism. Residues Ser58–Asn60, His182, and Lys213 contribute to the substrate site. Asp238 provides a ligand contact to Mg(2+).

This sequence belongs to the HAD-like hydrolase superfamily. Homodimer. It depends on Mg(2+) as a cofactor. Detected in brain (at protein level).

The protein localises to the cytoplasm. It localises to the cytosol. Its subcellular location is the cytoskeleton. It is found in the cell projection. The protein resides in the ruffle membrane. The protein localises to the lamellipodium membrane. It localises to the cell membrane. The catalysed reaction is pyridoxal 5'-phosphate + H2O = pyridoxal + phosphate. It carries out the reaction pyridoxine 5'-phosphate + H2O = pyridoxine + phosphate. It catalyses the reaction pyridoxamine + phosphate = pyridoxamine 5'-phosphate + H2O. The enzyme catalyses O-phospho-L-seryl-[protein] + H2O = L-seryl-[protein] + phosphate. Its function is as follows. Functions as a pyridoxal phosphate (PLP) phosphatase, which also catalyzes the dephosphorylation of pyridoxine 5'-phosphate (PNP) and pyridoxamine 5'-phosphate (PMP), with order of substrate preference PLP &gt; PNP &gt; PMP and therefore plays a role in vitamin B6 metabolism. Also functions as a protein serine phosphatase that specifically dephosphorylates 'Ser-3' in proteins of the actin-depolymerizing factor (ADF)/cofilin family like CFL1 and DSTN. Thereby, regulates cofilin-dependent actin cytoskeleton reorganization, being required for normal progress through mitosis and normal cytokinesis. Does not dephosphorylate phosphothreonines in LIMK1. Does not dephosphorylate peptides containing phosphotyrosine. The chain is Chronophin from Bos taurus (Bovine).